We begin with the raw amino-acid sequence, 380 residues long: Cytochrome b (380 aa).

4 consecutive transmembrane segments (helical) span residues 34–54, 78–99, 114–134, and 179–199; these read FGSL…LLAA, WLIR…YLHI, WNTG…GYVL, and FFAL…IHLT. Heme b is bound by residues H84 and H98. The heme b site is built by H183 and H197. An a ubiquinone-binding site is contributed by H202. The next 4 membrane-spanning stretches (helical) occupy residues 227–247, 289–309, 321–341, and 348–368; these read LKDI…ALFS, LGGV…PFLH, LSQL…WVGS, and FIII…VLFP.

This sequence belongs to the cytochrome b family. As to quaternary structure, the cytochrome bc1 complex contains 11 subunits: 3 respiratory subunits (MT-CYB, CYC1 and UQCRFS1), 2 core proteins (UQCRC1 and UQCRC2) and 6 low-molecular weight proteins (UQCRH/QCR6, UQCRB/QCR7, UQCRQ/QCR8, UQCR10/QCR9, UQCR11/QCR10 and a cleavage product of UQCRFS1). This cytochrome bc1 complex then forms a dimer. Heme b is required as a cofactor.

It is found in the mitochondrion inner membrane. Its function is as follows. Component of the ubiquinol-cytochrome c reductase complex (complex III or cytochrome b-c1 complex) that is part of the mitochondrial respiratory chain. The b-c1 complex mediates electron transfer from ubiquinol to cytochrome c. Contributes to the generation of a proton gradient across the mitochondrial membrane that is then used for ATP synthesis. The sequence is that of Cytochrome b (MT-CYB) from Pharomachrus antisianus (Crested quetzal).